We begin with the raw amino-acid sequence, 105 residues long: MASVMAWGAGAAVAAFLGRAGLVAWRRSRGGVGAMGKAFYKGGFEAKMTKKEATLILSLNERAITKDKVRKAHRTLMLLNHPDRGGSPYLATKVNEAKEFLDKNG.

Over 1 to 3 (MAS) the chain is Mitochondrial intermembrane. A helical membrane pass occupies residues 4-23 (VMAWGAGAAVAAFLGRAGLV). Residues 24-105 (AWRRSRGGVG…EAKEFLDKNG (82 aa)) lie on the Mitochondrial matrix side of the membrane. The J domain maps to 52–105 (EATLILSLNERAITKDKVRKAHRTLMLLNHPDRGGSPYLATKVNEAKEFLDKNG).

The protein belongs to the TIM14 family. As to quaternary structure, heterodimer with PAM16. Component of the PAM complex, at least composed of mtHsp70, MGE1, TIM44, PAM16, PAM17 and PAM18.

It localises to the mitochondrion inner membrane. Essential component of the PAM complex, a complex required for the translocation of transit peptide-containing proteins from the inner membrane into the mitochondrial matrix in an ATP-dependent manner. In the complex, it is required to stimulate activity of mtHSP70 (SSC1). In Gibberella zeae (strain ATCC MYA-4620 / CBS 123657 / FGSC 9075 / NRRL 31084 / PH-1) (Wheat head blight fungus), this protein is Mitochondrial import inner membrane translocase subunit TIM14 (PAM18).